Reading from the N-terminus, the 174-residue chain is Large ribosomal subunit protein uL18 (174 aa).

Belongs to the universal ribosomal protein uL18 family. In terms of assembly, part of the 50S ribosomal subunit. Contacts the 5S and 23S rRNAs.

Its function is as follows. This is one of the proteins that bind and probably mediate the attachment of the 5S RNA into the large ribosomal subunit, where it forms part of the central protuberance. This is Large ribosomal subunit protein uL18 from Methanosarcina acetivorans (strain ATCC 35395 / DSM 2834 / JCM 12185 / C2A).